Reading from the N-terminus, the 1939-residue chain is MSSDQEMAIFGEAAPYLRKSEKERIEAQNKPFDAKTSVFVAEPKESFVKGTVQSREGGKVTVKTEAGATLTVKEDQVFPMNPPKFDKIEDMAMMTHLHEPAVLYNLKERYAAWMIYTYSGLFCVTVNPYKWLPVYNAEVVTAYRGKKRQEAPPHIFSISDNAYQFMLTDRENQSILITGESGAGKTVNTKRVIQYFATIAVTGEKKKEEPTSGKMQGTLEDQIISANPLLEAFGNAKTVRNDNSSRFGKFIRIHFGTTGKLASADIETYLLEKSRVTFQLKAERSYHIFYQIMSNKKPELIEMLLITTNPYDYAFVSQGEITVPSIDDQEELMATDSAIEILGFTSDERVSIYKLTGAVMHYGNLKFKQKQREEQAEPDGTEVADKAAYLQGLNSADLLKALCYPRVKVGNEFVTKGQTVQQVYNAVGALAKAVYDKMFLWMVTRINQQLDTKQPRQYFIGVLDIAGFEIFDFNSLEQLCINFTNEKLQQFFNHHMFVLEQEEYKKEGIEWEFIDFGMDLAACIELIEKPMGIFSILEEECMFPKATDTSFKNKLYEQHLGKSNNFQKPKPAKGKVEAHFSLIHYAGTVDYNITGWLDKNKDPLNETVVGLYQKSSVKTLAFLFTGAAGADAEAGGGKKGGKKKGSSFQTVSALFRENLNKLMTNLRSTHPHFVRCIIPNETKTPGAMEHELVLHQLRCNGVLEGIRICRKGFPSRILYADFKQRYKVLNASAIPEGQFIDSKKASEKLLGSIDIDHTQYKFGHTKVFFKAGLLGLLEEMRDEKLAQLITRTQARCRGFLARVEYQKMVERRESIFCIQYNIRAFMNVKHWPWMKLYFKIKPLLKSAETEKEMANMKEEFEKTKESLAKAEAKRKELEEKMVALMQEKNDLQLQVQAEADSLADAEERCDQLIKTKIQLEAKIKEVTERAEDEEEINAELTAKKRKLEDECSELKKDIDDLELTLAKVEKEKHATENKVKNLTEEMAGLDETIAKLTKEKKALQEAHQQTLDDLQAEEDKVNTLTKAKTKLEQQVDDLEGSLEQEKKLRMDLERAKRKLEGDLKLAQESTMDIENDKQQLDEKLKKKEFEMSNLQSKIEDEQALAMQLQKKIKELQARIEELEEEIEAERASRAKAEKQRSDLSRELEEISERLEEAGGATSAQIEMNKKREAEFQKMRRDLEEATLQHEATAATLRKKHADSVAELGEQIDNLQRVKQKLEKEKSEMKMEIDDLASNMETVSKAKGNLEKMCRTLEDQLSELKTKEEEQQRLINDLTAQRARLQTESGEYSRQLDEKDTLVSQLSRGKQAFTQQIEELKRQLEEEIKAKSALAHAVQSSRHDCDLLREQYEEEQEAKAELQRAMSKANSEVAQWRTKYETDAIQRTEELEEAKKKLAQRLQDAEEHVEAVNAKCASLEKTKQRLQNEVEDLMIDVERSNAACAALDKKQRNFDKILAEWKQKYEETHAELEASQKESRSLSTELFKVKNAYEESLDQLETLKRENKNLQQEISDLTEQIAEGGKRIHELEKIKKQVEQEKSEIQAALEEAEASLEHEEGKILRIQLELNQVKSEVDRKIAEKDEEIDQLKRNHVRVVESMQSMLDAEIRSRNDAIRLKKKMEGDLNEMEIQLNHANRMAAEALRNYRNTQGILKDTQIHLDDALRSQEDLKEQLAMVERRANLLQAEIEELRATLEQTERSRKVAEQELLDASERVQLLHTQNTSLINTKKKLETDISQIQGEMEDIIQEARNAEEKAKKAITDAAMMAEELKKEQDTSAHLERMKKNLEQTVKDLQHRLDEAEQLALKGGKKQIQKLEARVRELEGEVESEQKRNVETVKGLRKHERRVKELTYQTEEDRKNILRLQDLVDKLQAKVKSYKRQAEEAEEQSNVNLSKFRKLQHELEEAEERADIAESQVNKLRVKSREVHTKIISEE.

The region spanning 33–82 is the Myosin N-terminal SH3-like domain; it reads DAKTSVFVAEPKESFVKGTVQSREGGKVTVKTEAGATLTVKEDQVFPMNP. Phosphothreonine occurs at positions 64 and 69. A Myosin motor domain is found at 86-782; that stretch reads DKIEDMAMMT…LLGLLEEMRD (697 aa). K130 bears the N6,N6,N6-trimethyllysine mark. 179–186 is a binding site for ATP; sequence GESGAGKT. At Y389 the chain carries Phosphotyrosine. T419 carries the post-translational modification Phosphothreonine. The residue at position 424 (Y424) is a Phosphotyrosine. Residues 659–681 form an actin-binding region; sequence LNKLMTNLRSTHPHFVRCIIPNE. A Pros-methylhistidine modification is found at H757. The tract at residues 761-775 is actin-binding; sequence KFGHTKVFFKAGLLG. The IQ domain occupies 785-814; it reads LAQLITRTQARCRGFLARVEYQKMVERRES. Residues 843-1939 adopt a coiled-coil conformation; sequence LLKSAETEKE…EVHTKIISEE (1097 aa). S1092 and S1096 each carry phosphoserine. Disordered stretches follow at residues 1125–1147 and 1153–1172; these read EIEA…SREL and RLEE…KKRE. Residues 1128–1147 are compositionally biased toward basic and acidic residues; sequence AERASRAKAEKQRSDLSREL. S1162 and S1237 each carry phosphoserine. T1241 carries the phosphothreonine modification. Phosphoserine is present on S1243. Position 1255 is a phosphothreonine (T1255). A Phosphoserine modification is found at S1261. 2 positions are modified to phosphothreonine: T1265 and T1286. 4 positions are modified to phosphoserine: S1288, S1292, S1303, and S1306. Position 1464 is a phosphotyrosine (Y1464). T1467 is modified (phosphothreonine). S1474 carries the phosphoserine modification. At Y1492 the chain carries Phosphotyrosine. At S1495 the chain carries Phosphoserine. Position 1501 is a phosphothreonine (T1501). Phosphoserine is present on S1514. At T1517 the chain carries Phosphothreonine. Residues S1542, S1554, S1574, S1600, S1603, S1714, and S1726 each carry the phosphoserine modification. T1730 and T1736 each carry phosphothreonine. Residue S1739 is modified to Phosphoserine.

It belongs to the TRAFAC class myosin-kinesin ATPase superfamily. Myosin family. As to quaternary structure, muscle myosin is a hexameric protein that consists of 2 heavy chain subunits (MHC), 2 alkali light chain subunits (MLC) and 2 regulatory light chain subunits (MLC-2). Interacts with SLC26A5.

The protein localises to the cytoplasm. Its subcellular location is the myofibril. In terms of biological role, required for normal hearing. It plays a role in cochlear amplification of auditory stimuli, likely through the positive regulation of prestin (SLC26A5) activity and outer hair cell (OHC) electromotility. The chain is Myosin-1 (MYH1) from Sus scrofa (Pig).